A 185-amino-acid polypeptide reads, in one-letter code: Ribosome-recycling factor (185 aa).

Residues 137–166 (DGLKKAEKDGDIGQDESRGQSEKVQKMTDD) are disordered.

It belongs to the RRF family.

The protein resides in the cytoplasm. Functionally, responsible for the release of ribosomes from messenger RNA at the termination of protein biosynthesis. May increase the efficiency of translation by recycling ribosomes from one round of translation to another. This Agrobacterium fabrum (strain C58 / ATCC 33970) (Agrobacterium tumefaciens (strain C58)) protein is Ribosome-recycling factor.